The following is a 420-amino-acid chain: Tyrosine--tRNA ligase (420 aa).

Tyr-33 provides a ligand contact to L-tyrosine. Positions 38 to 47 match the 'HIGH' region motif; it reads PTGDSLHAGH. The L-tyrosine site is built by Tyr-167 and Gln-171. The 'KMSKS' region signature appears at 227-231; the sequence is KFGKS. Residue Lys-230 participates in ATP binding. Positions 352 to 418 constitute an S4 RNA-binding domain; the sequence is PTIIDLLIGA…GKKNFAGVKY (67 aa).

The protein belongs to the class-I aminoacyl-tRNA synthetase family. TyrS type 1 subfamily. Homodimer.

It is found in the cytoplasm. It catalyses the reaction tRNA(Tyr) + L-tyrosine + ATP = L-tyrosyl-tRNA(Tyr) + AMP + diphosphate + H(+). Functionally, catalyzes the attachment of tyrosine to tRNA(Tyr) in a two-step reaction: tyrosine is first activated by ATP to form Tyr-AMP and then transferred to the acceptor end of tRNA(Tyr). The chain is Tyrosine--tRNA ligase from Corynebacterium diphtheriae (strain ATCC 700971 / NCTC 13129 / Biotype gravis).